A 160-amino-acid chain; its full sequence is Small ribosomal subunit protein uS17m (160 aa).

This sequence belongs to the universal ribosomal protein uS17 family. In terms of assembly, component of the mitochondrial ribosome small subunit (28S) which comprises a 12S rRNA and about 30 distinct proteins.

Its subcellular location is the mitochondrion. In Caenorhabditis elegans, this protein is Small ribosomal subunit protein uS17m (mrps-17).